The sequence spans 264 residues: tRNA pseudouridine synthase A (264 aa).

Asp-54 serves as the catalytic Nucleophile. Residue Tyr-113 participates in substrate binding.

The protein belongs to the tRNA pseudouridine synthase TruA family. In terms of assembly, homodimer.

The enzyme catalyses uridine(38/39/40) in tRNA = pseudouridine(38/39/40) in tRNA. Its function is as follows. Formation of pseudouridine at positions 38, 39 and 40 in the anticodon stem and loop of transfer RNAs. This Leptospira biflexa serovar Patoc (strain Patoc 1 / Ames) protein is tRNA pseudouridine synthase A.